The chain runs to 269 residues: Sulfur carrier protein FdhD (269 aa).

The Cysteine persulfide intermediate role is filled by Cys111.

Belongs to the FdhD family.

It is found in the cytoplasm. Functionally, required for formate dehydrogenase (FDH) activity. Acts as a sulfur carrier protein that transfers sulfur from IscS to the molybdenum cofactor prior to its insertion into FDH. In Brucella melitensis biotype 1 (strain ATCC 23456 / CCUG 17765 / NCTC 10094 / 16M), this protein is Sulfur carrier protein FdhD.